The following is a 313-amino-acid chain: Intelectin-1b (313 aa).

Residues Met1–Ala19 form the signal peptide. The Fibrinogen C-terminal domain occupies Ser32–Cys251. Cys41 and Cys70 are joined by a disulfide. Ca(2+)-binding residues include His86, Glu87, Asn89, Gly92, Gly97, Asp98, and Asp133. Intrachain disulfides connect Cys94–Cys280, Cys199–Cys259, and Cys251–Cys265. A glycan (N-linked (GlcNAc...) asparagine) is linked at Asn163. The Ca(2+) site is built by Asn260, Glu262, Glu274, and Asp282. Residues Glu262–His263 and Glu274 each bind a carbohydrate. Ser298 carries the GPI-anchor amidated serine lipid modification. A propeptide spanning residues Asn299–Arg313 is cleaved from the precursor.

As to expression, expressed in the globlet and Paneth cells of the small intestine of infected mice. Expressed in the ileum of uninfected mice.

The protein localises to the cell membrane. It is found in the secreted. In terms of biological role, may play a protective role in the innate immune response to parasite infection. This is Intelectin-1b (Itln1b) from Mus musculus (Mouse).